Consider the following 100-residue polypeptide: C-X-C motif chemokine 11 (100 aa).

The N-terminal stretch at 1-21 is a signal peptide; it reads MNRKVTAIALAAIIWATAAQG. 2 disulfide bridges follow: Cys30–Cys57 and Cys32–Cys74.

This sequence belongs to the intercrine alpha (chemokine CxC) family. As to quaternary structure, interacts with TNFAIP6 (via Link domain).

The protein localises to the secreted. Chemotactic for interleukin-activated T-cells but not unstimulated T-cells, neutrophils or monocytes. Induces calcium release in activated T-cells. Binds to CXCR3. May play an important role in CNS diseases which involve T-cell recruitment. May play a role in skin immune responses. In Mus musculus (Mouse), this protein is C-X-C motif chemokine 11 (Cxcl11).